The sequence spans 218 residues: Ras-related protein Rab-11B (218 aa).

Glycine 2 carries the post-translational modification N-acetylglycine. Arginine 4 carries the citrulline modification. Serine 20, glycine 21, glycine 23, lysine 24, serine 25, asparagine 26, asparagine 37, leucine 38, serine 40, serine 42, and threonine 43 together coordinate GTP. Serine 25 contributes to the Mg(2+) binding site. Positions 36–47 (FNLESKSTIGVE) match the Switch 1 motif. Mg(2+) is bound by residues threonine 43 and aspartate 66. The Switch 2 signature appears at 67–86 (TAGQERYRAITSAYYRGAVG). Glycine 69, asparagine 124, lysine 125, aspartate 127, alanine 155, and leucine 156 together coordinate GTP. Positions 184-218 (RAAHDESPGNNVVDISVPPTTDGQKPNKLQCCQNL) are disordered. S-geranylgeranyl cysteine attachment occurs at residues cysteine 214 and cysteine 215. At cysteine 215 the chain carries Cysteine methyl ester. The propeptide at 216 to 218 (QNL) is removed in mature form.

Belongs to the small GTPase superfamily. Rab family. Interacts with KCNMA1. Interacts with RAB11FIP1, RAB11FIP2, RAB11FIP3 and RAB11FIP4. May interact with TBC1D14. Interacts with ATP6V1E1. Interacts with PI4KB. Interacts (GDP-bound form) with ZFYVE27. Interacts (GDP-bound form) with KIF5A in a ZFYVE27-dependent manner. Interacts with RELCH. Interacts (in GTP-bound form) with TBC1D8B (via domain Rab-GAP TBC). Forms a complex containing RAB11B, ASAP1, Rabin8/RAB3IP, RAP11FIP3 and ARF4. Interacts with WDR44. Mg(2+) serves as cofactor. Post-translationally, citrullinated by PADI4. In terms of processing, (Microbial infection) Glycosylated on arginine residues by S.typhimurium protein Ssek3.

The protein resides in the recycling endosome membrane. It localises to the cytoplasmic vesicle. The protein localises to the secretory vesicle. Its subcellular location is the synaptic vesicle membrane. It is found in the phagosome membrane. The enzyme catalyses GTP + H2O = GDP + phosphate + H(+). With respect to regulation, regulated by guanine nucleotide exchange factors (GEFs) which promote the exchange of bound GDP for free GTP. Regulated by GTPase activating proteins (GAPs) which increase the GTP hydrolysis activity. Inhibited by GDP dissociation inhibitors (GDIs) which prevent Rab-GDP dissociation. Functionally, the small GTPases Rab are key regulators of intracellular membrane trafficking, from the formation of transport vesicles to their fusion with membranes. Rabs cycle between an inactive GDP-bound form and an active GTP-bound form that is able to recruit to membranes different set of downstream effectors directly responsible for vesicle formation, movement, tethering and fusion. The small Rab GTPase RAB11B plays a role in endocytic recycling, regulating apical recycling of several transmembrane proteins including cystic fibrosis transmembrane conductance regulator/CFTR, epithelial sodium channel/ENaC, potassium voltage-gated channel, and voltage-dependent L-type calcium channel. May also regulate constitutive and regulated secretion, like insulin granule exocytosis. Required for melanosome transport and release from melanocytes. Also regulates V-ATPase intracellular transport in response to extracellular acidosis. Promotes Rabin8/RAB3IP preciliary vesicular trafficking to mother centriole by forming a ciliary targeting complex containing Rab11, ASAP1, Rabin8/RAB3IP, RAB11FIP3 and ARF4, thereby regulating ciliogenesis initiation. On the contrary, upon LPAR1 receptor signaling pathway activation, interaction with phosphorylated WDR44 prevents Rab11-RAB3IP-RAB11FIP3 complex formation and cilia growth. The polypeptide is Ras-related protein Rab-11B (Homo sapiens (Human)).